Here is a 385-residue protein sequence, read N- to C-terminus: Di-N-acetylchitobiase (385 aa).

A signal peptide spans 1–38 (MSRPQLRRWRLVSSPPSGVPGLALLALLALLALRLAAG). Residues 39–385 (TDCPCPEPEL…EVLKPKLLQR (347 aa)) enclose the GH18 domain. The Proton donor role is filled by E143. N193, N228, N262, and N299 each carry an N-linked (GlcNAc...) asparagine glycan.

The protein belongs to the glycosyl hydrolase 18 family.

The protein resides in the lysosome. Involved in the degradation of asparagine-linked glycoproteins. Hydrolyze of N-acetyl-beta-D-glucosamine (1-4)N-acetylglucosamine chitobiose core from the reducing end of the bond, it requires prior cleavage by glycosylasparaginase. The polypeptide is Di-N-acetylchitobiase (CTBS) (Homo sapiens (Human)).